Here is a 34-residue protein sequence, read N- to C-terminus: Photosystem II reaction center protein M (34 aa).

Residues 5–25 (ILAFIATALFILVPTAFLLII) traverse the membrane as a helical segment.

Belongs to the PsbM family. As to quaternary structure, PSII is composed of 1 copy each of membrane proteins PsbA, PsbB, PsbC, PsbD, PsbE, PsbF, PsbH, PsbI, PsbJ, PsbK, PsbL, PsbM, PsbT, PsbX, PsbY, PsbZ, Psb30/Ycf12, at least 3 peripheral proteins of the oxygen-evolving complex and a large number of cofactors. It forms dimeric complexes.

Its subcellular location is the plastid. The protein resides in the chloroplast thylakoid membrane. Its function is as follows. One of the components of the core complex of photosystem II (PSII). PSII is a light-driven water:plastoquinone oxidoreductase that uses light energy to abstract electrons from H(2)O, generating O(2) and a proton gradient subsequently used for ATP formation. It consists of a core antenna complex that captures photons, and an electron transfer chain that converts photonic excitation into a charge separation. This subunit is found at the monomer-monomer interface. The polypeptide is Photosystem II reaction center protein M (Cucumis sativus (Cucumber)).